The chain runs to 639 residues: MKIINIGVLAHVDAGKTTLTESLLYNSGAITELGSVDKGTTRTDNTLLERQRGITIQTGITSFQWENTKVNIIDTPGHMDFLAEVYRSLSVLDGAILLISAKDGVQAQTRILFHALRKMGIPTIFFINKIDQNGIDLSTVYQDIKEKLSAEIVIKQKVELYPNVCVTNFTESEQWDTVIEGNDDLLEKYMSGKSLEALELEQEESIRFQNCSLFPLYHGSAKSNIGIDNLIEVITNKFYSSTHRGPSELCGNVFKIEYTKKRQRLAYIRLYSGVLHLRDSVRVSEKEKIKVTEMYTSINGELCKIDRAYSGEIVILQNEFLKLNSVLGDTKLLPQRKKIENPHPLLQTTVEPSKPEQREMLLDALLEISDSDPLLRYYVDSTTHEIILSFLGKVQMEVISALLQEKYHVEIEITEPTVIYMERPLKNAEYTIHIEVPPNPFWASIGLSVSPLPLGSGMQYESSVSLGYLNQSFQNAVMEGIRYGCEQGLYGWNVTDCKICFKYGLYYSPVSTPADFRMLAPIVLEQVLKKAGTELLEPYLSFKIYAPQEYLSRAYNDAPKYCANIVDTQLKNNEVILSGEIPARCIQEYRSDLTFFTNGRSVCLTELKGYHVTTGEPVCQPRRPNSRIDKVRYMFNKIT.

Residues 1–242 enclose the tr-type G domain; sequence MKIINIGVLA…VITNKFYSST (242 aa). Residues 10-17, 74-78, and 128-131 each bind GTP; these read AHVDAGKT, DTPGH, and NKID.

The protein belongs to the TRAFAC class translation factor GTPase superfamily. Classic translation factor GTPase family. TetM/TetO subfamily.

Its function is as follows. Abolishes the inhibitory effect of tetracyclin on protein synthesis by a non-covalent modification of the ribosomes. The polypeptide is Tetracycline resistance protein TetM from transposon Tn916 (tetM) (Enterococcus faecalis (Streptococcus faecalis)).